The following is a 569-amino-acid chain: CTP synthase (569 aa).

The interval 1–272 (MARPKNVKHI…DSRVLKKLGI (272 aa)) is amidoligase domain. Ser18 contributes to the CTP binding site. Ser18 is a UTP binding site. Residue 19-24 (SLGKGI) coordinates ATP. An L-glutamine-binding site is contributed by Tyr59. Asp76 is a binding site for ATP. Mg(2+)-binding residues include Asp76 and Glu146. Residues 153–155 (DIE), 193–198 (KTKPTQ), and Lys229 contribute to the CTP site. UTP contacts are provided by residues 193-198 (KTKPTQ) and Lys229. Residues 299–543 (TIGICGKYTE…VAAAKDYARG (245 aa)) enclose the Glutamine amidotransferase type-1 domain. Gly363 provides a ligand contact to L-glutamine. Cys390 serves as the catalytic Nucleophile; for glutamine hydrolysis. L-glutamine is bound by residues 391 to 394 (LGMQ), Glu414, and Arg471. Active-site residues include His516 and Glu518.

The protein belongs to the CTP synthase family. As to quaternary structure, homotetramer.

It carries out the reaction UTP + L-glutamine + ATP + H2O = CTP + L-glutamate + ADP + phosphate + 2 H(+). The catalysed reaction is L-glutamine + H2O = L-glutamate + NH4(+). The enzyme catalyses UTP + NH4(+) + ATP = CTP + ADP + phosphate + 2 H(+). Its pathway is pyrimidine metabolism; CTP biosynthesis via de novo pathway; CTP from UDP: step 2/2. Allosterically activated by GTP, when glutamine is the substrate; GTP has no effect on the reaction when ammonia is the substrate. The allosteric effector GTP functions by stabilizing the protein conformation that binds the tetrahedral intermediate(s) formed during glutamine hydrolysis. Inhibited by the product CTP, via allosteric rather than competitive inhibition. In terms of biological role, catalyzes the ATP-dependent amination of UTP to CTP with either L-glutamine or ammonia as the source of nitrogen. Regulates intracellular CTP levels through interactions with the four ribonucleotide triphosphates. The protein is CTP synthase of Chlorobium chlorochromatii (strain CaD3).